Here is a 264-residue protein sequence, read N- to C-terminus: Major prion protein 1 (264 aa).

An N-terminal signal peptide occupies residues 1 to 24 (MVKSHIGSWILVLFVAMWSDVALC). The segment at 25 to 241 (KKRPKPGGGW…ESEAYYQRGA (217 aa)) is interaction with GRB2, ERI3 and SYN1. The interval 28-118 (PKPGGGWNTG…QWNKPSKPKT (91 aa)) is disordered. Tandem repeats lie at residues 54–62 (SQGGGGWGQ), 63–70 (PHGGGWGQ), 71–78 (PHGGGWGQ), 79–86 (PHGGGWGQ), 87–94 (PHGGGWGQ), and 95–103 (PHGGGGWGQ). The tract at residues 54-103 (SQGGGGWGQPHGGGWGQPHGGGWGQPHGGGWGQPHGGGWGQPHGGGGWGQ) is 6 X 8 AA tandem repeats of P-H-G-G-G-W-G-Q. The span at 55–107 (QGGGGWGQPHGGGWGQPHGGGWGQPHGGGWGQPHGGGWGQPHGGGGWGQGGTH) shows a compositional bias: gly residues. Residues histidine 72, glycine 73, glycine 74, histidine 80, glycine 81, glycine 82, histidine 88, glycine 89, glycine 90, histidine 96, glycine 98, and glycine 99 each coordinate Cu(2+). A disulfide bond links cysteine 190 and cysteine 225. Residues asparagine 192 and asparagine 208 are each glycosylated (N-linked (GlcNAc...) asparagine). A lipid anchor (GPI-anchor amidated alanine) is attached at alanine 241. Residues 242–264 (SVILFSSPPVILLISFLIFLIVG) constitute a propeptide, removed in mature form.

Belongs to the prion family. As to quaternary structure, monomer and homodimer. Has a tendency to aggregate into amyloid fibrils containing a cross-beta spine, formed by a steric zipper of superposed beta-strands. Soluble oligomers may represent an intermediate stage on the path to fibril formation. Copper binding may promote oligomerization. Interacts with GRB2, APP, ERI3/PRNPIP and SYN1. Mislocalized cytosolically exposed PrP interacts with MGRN1; this interaction alters MGRN1 subcellular location and causes lysosomal enlargement. Interacts with KIAA1191.

The protein localises to the cell membrane. It is found in the golgi apparatus. Its function is as follows. Its primary physiological function is unclear. Has cytoprotective activity against internal or environmental stresses. May play a role in neuronal development and synaptic plasticity. May be required for neuronal myelin sheath maintenance. May play a role in iron uptake and iron homeostasis. Soluble oligomers are toxic to cultured neuroblastoma cells and induce apoptosis (in vitro). Association with GPC1 (via its heparan sulfate chains) targets PRNP to lipid rafts. Also provides Cu(2+) or Zn(2+) for the ascorbate-mediated GPC1 deaminase degradation of its heparan sulfate side chains. This Tragelaphus strepsiceros (Greater kudu) protein is Major prion protein 1.